The chain runs to 152 residues: 3-hydroxyacyl-[acyl-carrier-protein] dehydratase FabZ (152 aa).

Histidine 58 is an active-site residue.

Belongs to the thioester dehydratase family. FabZ subfamily.

It is found in the cytoplasm. It catalyses the reaction a (3R)-hydroxyacyl-[ACP] = a (2E)-enoyl-[ACP] + H2O. In terms of biological role, involved in unsaturated fatty acids biosynthesis. Catalyzes the dehydration of short chain beta-hydroxyacyl-ACPs and long chain saturated and unsaturated beta-hydroxyacyl-ACPs. In Prochlorococcus marinus (strain MIT 9515), this protein is 3-hydroxyacyl-[acyl-carrier-protein] dehydratase FabZ.